The following is a 392-amino-acid chain: Alkaline phosphatase L (392 aa).

The N-terminal stretch at 1 to 23 (MYKRSLIAASLSVAALVSAQAMA) is a signal peptide.

This sequence belongs to the PstS family. As to quaternary structure, homodimer.

It localises to the secreted. The protein localises to the periplasm. It carries out the reaction a phosphate monoester + H2O = an alcohol + phosphate. Functionally, has both a phosphomonoesterase and phosphodiesterase activity. This is Alkaline phosphatase L from Pseudomonas aeruginosa.